A 426-amino-acid polypeptide reads, in one-letter code: Probable M18 family aminopeptidase 2 (426 aa).

Zn(2+) contacts are provided by His79, His156, and His399.

This sequence belongs to the peptidase M18 family. Requires Zn(2+) as cofactor.

The polypeptide is Probable M18 family aminopeptidase 2 (apeB) (Mycobacterium leprae (strain TN)).